A 617-amino-acid polypeptide reads, in one-letter code: Proline--tRNA ligase (617 aa).

Belongs to the class-II aminoacyl-tRNA synthetase family. ProS type 1 subfamily. In terms of assembly, homodimer.

The protein localises to the cytoplasm. It carries out the reaction tRNA(Pro) + L-proline + ATP = L-prolyl-tRNA(Pro) + AMP + diphosphate. In terms of biological role, catalyzes the attachment of proline to tRNA(Pro) in a two-step reaction: proline is first activated by ATP to form Pro-AMP and then transferred to the acceptor end of tRNA(Pro). As ProRS can inadvertently accommodate and process non-cognate amino acids such as alanine and cysteine, to avoid such errors it has two additional distinct editing activities against alanine. One activity is designated as 'pretransfer' editing and involves the tRNA(Pro)-independent hydrolysis of activated Ala-AMP. The other activity is designated 'posttransfer' editing and involves deacylation of mischarged Ala-tRNA(Pro). The misacylated Cys-tRNA(Pro) is not edited by ProRS. The polypeptide is Proline--tRNA ligase (Streptococcus pneumoniae (strain Hungary19A-6)).